Reading from the N-terminus, the 201-residue chain is Small ribosomal subunit protein uS4c (201 aa).

A disordered region spans residues 20 to 44; that stretch reads GLTSKRPTVGSELRNQSRSTKKSQY. In terms of domain architecture, S4 RNA-binding spans 89–150; sequence MRLDNILFRL…NKKSKTLIQN (62 aa).

The protein belongs to the universal ribosomal protein uS4 family. Part of the 30S ribosomal subunit. Contacts protein S5. The interaction surface between S4 and S5 is involved in control of translational fidelity.

Its subcellular location is the plastid. The protein resides in the chloroplast. In terms of biological role, one of the primary rRNA binding proteins, it binds directly to 16S rRNA where it nucleates assembly of the body of the 30S subunit. Functionally, with S5 and S12 plays an important role in translational accuracy. The chain is Small ribosomal subunit protein uS4c (rps4) from Lotus japonicus (Lotus corniculatus var. japonicus).